A 209-amino-acid chain; its full sequence is 8-oxoguanine DNA glycosylase/AP lyase (209 aa).

Residues lysine 131 and aspartate 149 contribute to the active site.

Belongs to the type-2 OGG1 family.

The catalysed reaction is 2'-deoxyribonucleotide-(2'-deoxyribose 5'-phosphate)-2'-deoxyribonucleotide-DNA = a 3'-end 2'-deoxyribonucleotide-(2,3-dehydro-2,3-deoxyribose 5'-phosphate)-DNA + a 5'-end 5'-phospho-2'-deoxyribonucleoside-DNA + H(+). Catalyzes the excision of an oxidatively damaged form of guanine (7,8-dihydro-8-oxoguanine = 8-oxoG) from DNA. Also cleaves the DNA backbone at apurinic/apyrimidinic sites (AP sites). This chain is 8-oxoguanine DNA glycosylase/AP lyase, found in Korarchaeum cryptofilum (strain OPF8).